The primary structure comprises 329 residues: Beta-ketoacyl-[acyl-carrier-protein] synthase III (329 aa).

Residues cysteine 123 and histidine 256 contribute to the active site. Residues glutamine 257 to arginine 261 form an ACP-binding region. Asparagine 286 is a catalytic residue.

It belongs to the thiolase-like superfamily. FabH family. As to quaternary structure, homodimer.

It is found in the cytoplasm. The catalysed reaction is malonyl-[ACP] + acetyl-CoA + H(+) = 3-oxobutanoyl-[ACP] + CO2 + CoA. Its pathway is lipid metabolism; fatty acid biosynthesis. Catalyzes the condensation reaction of fatty acid synthesis by the addition to an acyl acceptor of two carbons from malonyl-ACP. Catalyzes the first condensation reaction which initiates fatty acid synthesis and may therefore play a role in governing the total rate of fatty acid production. Possesses both acetoacetyl-ACP synthase and acetyl transacylase activities. Its substrate specificity determines the biosynthesis of branched-chain and/or straight-chain of fatty acids. In Burkholderia cenocepacia (strain HI2424), this protein is Beta-ketoacyl-[acyl-carrier-protein] synthase III.